A 439-amino-acid chain; its full sequence is Cysteine--tRNA ligase (439 aa).

C28 is a Zn(2+) binding site. The short motif at 30 to 40 is the 'HIGH' region element; that stretch reads ITVYDLCHIGH. Zn(2+) is bound by residues C209, H234, and E238. The 'KMSKS' region motif lies at 266 to 270; it reads KMSKS. K269 serves as a coordination point for ATP.

The protein belongs to the class-I aminoacyl-tRNA synthetase family. Monomer. It depends on Zn(2+) as a cofactor.

The protein localises to the cytoplasm. It catalyses the reaction tRNA(Cys) + L-cysteine + ATP = L-cysteinyl-tRNA(Cys) + AMP + diphosphate. The polypeptide is Cysteine--tRNA ligase (Shigella boydii serotype 4 (strain Sb227)).